We begin with the raw amino-acid sequence, 122 residues long: MIQMQTELQVADNSGAKRVECIKVLGGSHRRYASIGDVIKVTVKEASPRGKAKKGSVYNAVVVRTAKGVRRKDGSKVRFDGNAAVLLNANGQPIGTRIFGPVTRELRTEKFMKIVSLAPEVL.

This sequence belongs to the universal ribosomal protein uL14 family. As to quaternary structure, part of the 50S ribosomal subunit. Forms a cluster with proteins L3 and L19. In the 70S ribosome, L14 and L19 interact and together make contacts with the 16S rRNA in bridges B5 and B8.

Its function is as follows. Binds to 23S rRNA. Forms part of two intersubunit bridges in the 70S ribosome. The chain is Large ribosomal subunit protein uL14 from Francisella tularensis subsp. holarctica (strain LVS).